The sequence spans 1464 residues: Glutamate receptor ionotropic, NMDA 2A (1464 aa).

A signal peptide spans 1–22 (MGRVGYWTLLVLPALLVWRGPA). The Extracellular portion of the chain corresponds to 23-556 (PSAAAEKGPP…SAFLEPFSAS (534 aa)). Residue histidine 44 coordinates Zn(2+). Residue asparagine 75 is glycosylated (N-linked (GlcNAc...) asparagine). Cysteine 87 and cysteine 320 are oxidised to a cystine. Positions 128, 266, and 282 each coordinate Zn(2+). Residues asparagine 340, asparagine 380, asparagine 443, and asparagine 444 are each glycosylated (N-linked (GlcNAc...) asparagine). Intrachain disulfides connect cysteine 429–cysteine 455 and cysteine 436–cysteine 456. 3 residues coordinate L-glutamate: serine 511, threonine 513, and arginine 518. Residue asparagine 541 is glycosylated (N-linked (GlcNAc...) asparagine). Residues 557-576 (VWVMMFVMLLIVSAIAVFVF) form a helical membrane-spanning segment. Residues 577-600 (EYFSPVGYNRNLAKGKAPHGPSFT) are Cytoplasmic-facing. The pore-forming stretch occupies residues 599–620 (FTIGKAIWLLWGLVFNNSVPVQ). The segment at residues 601–615 (IGKAIWLLWGLVFNN) is an intramembrane region (discontinuously helical). The Cytoplasmic segment spans residues 616–625 (SVPVQNPKGT). A helical membrane pass occupies residues 626–646 (TSKIMVSVWAFFAVIFLASYT). Over 647–814 (ANLAAFMIQE…NEVMSSQLDI (168 aa)) the chain is Extracellular. An N-linked (GlcNAc...) asparagine glycan is attached at asparagine 687. L-glutamate contacts are provided by serine 689, threonine 690, and aspartate 731. The cysteines at positions 745 and 800 are disulfide-linked. Residues 815–835 (DNMAGVFYMLAAAMALSLITF) traverse the membrane as a helical segment. At 836-1464 (IWEHLFYWKL…KKMPSIESDV (629 aa)) the chain is on the cytoplasmic side. Phosphoserine is present on residues serine 882, serine 890, and serine 929. Polar residues-rich tracts occupy residues 1001 to 1010 (STESKVNSRP) and 1023 to 1032 (QDSLSQNPVS). Disordered stretches follow at residues 1001–1088 (STES…NFKR) and 1148–1180 (PDPY…GLSN). Phosphoserine is present on serine 1025. 2 stretches are compositionally biased toward basic and acidic residues: residues 1033–1043 (QRDEATAENRT) and 1052–1061 (LPEEMAHSDI). Residues serine 1059 and serine 1062 each carry the phosphoserine modification. Over residues 1070-1087 (CHREPDNSKNPKTKDNFK) the composition is skewed to basic and acidic residues. The segment covering 1165 to 1180 (LPMNRNPLQNEEGLSN) has biased composition (polar residues). Residues serine 1198 and serine 1291 each carry the phosphoserine modification. A disordered region spans residues 1335 to 1372 (KLSGKKSSLFPQGLEDSKRSKSLLPDHTSDNPFLHSHR). A PDZ-binding motif is present at residues 1462 to 1464 (SDV).

Belongs to the glutamate-gated ion channel (TC 1.A.10.1) family. NR2A/GRIN2A subfamily. As to quaternary structure, heterotetramer. Forms heterotetrameric channels composed of two GluN1/zeta subunits (GRIN1), and two identical GluN2/epsilon subunits (GRIN2A, GRIN2B, GRIN2C or GRIN2D) or GluN3 subunits (GRIN3A or GRIN3B) (in vitro). Can also form heterotetrameric channels that contain at least two GluN1 subunits and at least two different GluN2 subunits (or a combination of one GluN2 and one GluN3 subunits) (in vitro). In vivo, the subunit composition may depend on the expression levels of the different subunits. Found in a complex with GRIN1, GRIN3A and PPP2CB. Found in a complex with GRIN1 and GRIN3B. Interacts with AIP1. Interacts with HIP1 and NETO1. Interacts with SNX27 (via PDZ domain); the interaction is required for recycling to the plasma membrane when endocytosed and prevent degradation in lysosomes. Interacts with PDZ domains of PATJ and DLG4. Interacts with LRFN2. Interacts with RPH3A and DLG4; this ternary complex regulates NMDA receptor composition at postsynaptic membranes. Interacts with SORCS2. Interacts with ARC; preventing ARC oligomerization. Interacts (via the extreme C-terminus) with FRMPD2 (the second PDZ domain); the interaction is direct and is likely to promote NMDAR-mediated neural signal transmission. GRIN2A binds FRMPD2 with lower affinity than GRIN2B.

The protein localises to the cell projection. It is found in the dendritic spine. Its subcellular location is the cell membrane. The protein resides in the synapse. It localises to the postsynaptic cell membrane. The protein localises to the cytoplasmic vesicle membrane. It carries out the reaction Ca(2+)(in) = Ca(2+)(out). The catalysed reaction is Na(+)(in) = Na(+)(out). It catalyses the reaction K(+)(in) = K(+)(out). In terms of biological role, component of N-methyl-D-aspartate (NMDA) receptors (NMDARs) that function as heterotetrameric, ligand-gated cation channels with high calcium permeability and voltage-dependent block by Mg(2+). NMDARs participate in synaptic plasticity for learning and memory formation by contributing to the slow phase of excitatory postsynaptic current, long-term synaptic potentiation, and learning. Channel activation requires binding of the neurotransmitter L-glutamate to the GluN2 subunit, glycine or D-serine binding to the GluN1 subunit, plus membrane depolarization to eliminate channel inhibition by Mg(2+). NMDARs mediate simultaneously the potasium efflux and the influx of calcium and sodium. Each GluN2 subunit confers differential attributes to channel properties, including activation, deactivation and desensitization kinetics, pH sensitivity, Ca2(+) permeability, and binding to allosteric modulators. Participates in the synaptic plasticity regulation through activation by the L-glutamate releaseed by BEST1, into the synaptic cleft, upon F2R/PAR-1 activation in astrocyte. The chain is Glutamate receptor ionotropic, NMDA 2A from Pan troglodytes (Chimpanzee).